Here is a 406-residue protein sequence, read N- to C-terminus: 2,3-bisphosphoglycerate-independent phosphoglycerate mutase (406 aa).

Belongs to the BPG-independent phosphoglycerate mutase family. A-PGAM subfamily.

The catalysed reaction is (2R)-2-phosphoglycerate = (2R)-3-phosphoglycerate. The protein operates within carbohydrate degradation; glycolysis; pyruvate from D-glyceraldehyde 3-phosphate: step 3/5. In terms of biological role, catalyzes the interconversion of 2-phosphoglycerate and 3-phosphoglycerate. In Methanococcus vannielii (strain ATCC 35089 / DSM 1224 / JCM 13029 / OCM 148 / SB), this protein is 2,3-bisphosphoglycerate-independent phosphoglycerate mutase.